The chain runs to 364 residues: Mannose-1-phosphate guanyltransferase (364 aa).

Belongs to the transferase hexapeptide repeat family.

It localises to the cytoplasm. It catalyses the reaction alpha-D-mannose 1-phosphate + GTP + H(+) = GDP-alpha-D-mannose + diphosphate. The protein operates within nucleotide-sugar biosynthesis; GDP-alpha-D-mannose biosynthesis; GDP-alpha-D-mannose from alpha-D-mannose 1-phosphate (GTP route): step 1/1. Functionally, involved in cell wall synthesis where it is required for glycosylation. Involved in cell cycle progression through cell-size checkpoint. The sequence is that of Mannose-1-phosphate guanyltransferase (mpg1) from Hypocrea jecorina (Trichoderma reesei).